The primary structure comprises 155 residues: 6,7-dimethyl-8-ribityllumazine synthase (155 aa).

5-amino-6-(D-ribitylamino)uracil contacts are provided by residues F24, 58–60 (AFE), and 82–84 (VII). 87 to 88 (ST) provides a ligand contact to (2S)-2-hydroxy-3-oxobutyl phosphate. Catalysis depends on H90, which acts as the Proton donor. F115 contacts 5-amino-6-(D-ribitylamino)uracil. R129 lines the (2S)-2-hydroxy-3-oxobutyl phosphate pocket.

It belongs to the DMRL synthase family.

It catalyses the reaction (2S)-2-hydroxy-3-oxobutyl phosphate + 5-amino-6-(D-ribitylamino)uracil = 6,7-dimethyl-8-(1-D-ribityl)lumazine + phosphate + 2 H2O + H(+). The protein operates within cofactor biosynthesis; riboflavin biosynthesis; riboflavin from 2-hydroxy-3-oxobutyl phosphate and 5-amino-6-(D-ribitylamino)uracil: step 1/2. Functionally, catalyzes the formation of 6,7-dimethyl-8-ribityllumazine by condensation of 5-amino-6-(D-ribitylamino)uracil with 3,4-dihydroxy-2-butanone 4-phosphate. This is the penultimate step in the biosynthesis of riboflavin. This chain is 6,7-dimethyl-8-ribityllumazine synthase, found in Chlorobium limicola (strain DSM 245 / NBRC 103803 / 6330).